The following is a 226-amino-acid chain: Ribonuclease 3 (226 aa).

In terms of domain architecture, RNase III spans 6 to 128; sequence INRLQRKLGY…LIGGIFLDSD (123 aa). E41 contacts Mg(2+). The active site involves D45. Residues D114 and E117 each coordinate Mg(2+). Residue E117 is part of the active site. The DRBM domain occupies 155–225; sequence DPKTRLQEYL…AEQALKQLEL (71 aa).

It belongs to the ribonuclease III family. As to quaternary structure, homodimer. The cofactor is Mg(2+).

It localises to the cytoplasm. The enzyme catalyses Endonucleolytic cleavage to 5'-phosphomonoester.. In terms of biological role, digests double-stranded RNA. Involved in the processing of primary rRNA transcript to yield the immediate precursors to the large and small rRNAs (23S and 16S). Processes some mRNAs, and tRNAs when they are encoded in the rRNA operon. Processes pre-crRNA and tracrRNA of type II CRISPR loci if present in the organism. This chain is Ribonuclease 3, found in Yersinia enterocolitica serotype O:8 / biotype 1B (strain NCTC 13174 / 8081).